A 124-amino-acid chain; its full sequence is MRDSPTHKEQRAQNTMSDQMPFPFNNFTYFFTLFSKFFSSFHHCTCSLSVSRQYLALDGIYHPLRAAFPNNSTLRRHFTKNRTPRHTGFSPSMTSCSKEHRQGTAPKLPSPNYNSGTEGTRFQI.

The tract at residues 80–124 is disordered; the sequence is KNRTPRHTGFSPSMTSCSKEHRQGTAPKLPSPNYNSGTEGTRFQI. Over residues 111–124 the composition is skewed to polar residues; that stretch reads PNYNSGTEGTRFQI.

The protein localises to the mitochondrion. Functionally, may be involved in mtDNA stability or mitochondrial gene expression regulation at the post-transcriptional level. The polypeptide is Protein TAR1 (TAR1) (Saccharomyces cerevisiae (strain ATCC 204508 / S288c) (Baker's yeast)).